The sequence spans 421 residues: Large ribosomal subunit protein uL4 (421 aa).

A2 carries the N-acetylalanine modification. N6-acetyllysine is present on K14. R97 is modified (omega-N-methylarginine). K106 bears the N6-acetyllysine mark. K239 participates in a covalent cross-link: Glycyl lysine isopeptide (Lys-Gly) (interchain with G-Cter in SUMO2). K259 carries the N6-acetyllysine modification. A Phosphothreonine modification is found at T266. At S290 the chain carries Phosphoserine. R300 bears the Citrulline mark. Residue K327 forms a Glycyl lysine isopeptide (Lys-Gly) (interchain with G-Cter in SUMO2) linkage. N6-acetyllysine is present on residues K333 and K353. The disordered stretch occupies residues 359–421 (EAKSEEKGVP…PTTEEKKPAA (63 aa)). N6-acetyllysine; alternate is present on K361. K361 participates in a covalent cross-link: Glycyl lysine isopeptide (Lys-Gly) (interchain with G-Cter in SUMO1); alternate. Phosphoserine is present on S362. Basic residues predominate over residues 368 to 391 (PGKKPRRKKGKKTVGVKKPKKPVV). The span at 401–421 (PAADKKPAEKKPTTEEKKPAA) shows a compositional bias: basic and acidic residues.

This sequence belongs to the universal ribosomal protein uL4 family. Component of the large ribosomal subunit. May bind IPO9 with low affinity. Interacts with RBM3. In terms of processing, citrullinated by PADI4.

The protein resides in the cytoplasm. Component of the large ribosomal subunit. The ribosome is a large ribonucleoprotein complex responsible for the synthesis of proteins in the cell. In Canis lupus familiaris (Dog), this protein is Large ribosomal subunit protein uL4 (RPL4).